Here is a 107-residue protein sequence, read N- to C-terminus: Homeobox protein HD-3 (107 aa).

Positions 6–65 form a DNA-binding region, homeobox; it reads SKAPRTRMTAGQTRVLMSFFKDNPFPSTTAREKLSKVLGVGPRTVQIWFQNQRQKARGQA.

Its subcellular location is the nucleus. This Encephalitozoon cuniculi (strain GB-M1) (Microsporidian parasite) protein is Homeobox protein HD-3 (HD-3).